Reading from the N-terminus, the 428-residue chain is Elongation factor 1-alpha (428 aa).

In terms of domain architecture, tr-type G spans 5 to 215 (KPHVNIVFIG…ALDQIPEPPK (211 aa)). The segment at 14-21 (GHVDHGKS) is G1. GTP is bound at residue 14 to 21 (GHVDHGKS). Residue Ser-21 participates in Mg(2+) binding. The interval 68–72 (GITID) is G2. The tract at residues 89 to 92 (DAPG) is G3. GTP contacts are provided by residues 89-93 (DAPGH) and 144-147 (NKMD). A G4 region spans residues 144 to 147 (NKMD). The interval 181-183 (SAW) is G5.

Belongs to the TRAFAC class translation factor GTPase superfamily. Classic translation factor GTPase family. EF-Tu/EF-1A subfamily.

It localises to the cytoplasm. The catalysed reaction is GTP + H2O = GDP + phosphate + H(+). In terms of biological role, GTP hydrolase that promotes the GTP-dependent binding of aminoacyl-tRNA to the A-site of ribosomes during protein biosynthesis. The polypeptide is Elongation factor 1-alpha (Thermococcus onnurineus (strain NA1)).